A 1016-amino-acid chain; its full sequence is Nonsense-mediated mRNA decay factor SMG5 (1016 aa).

An N-acetylserine modification is found at Ser-2. Residues Ser-2 and Ser-423 each carry the phosphoserine modification. Disordered stretches follow at residues 408 to 561 (NPVP…PSEA) and 594 to 637 (PTTN…RSCR). Basic residues predominate over residues 449–466 (KSRKFSRLSCLRRRRHPP). The span at 594–603 (PTTNPHTSAS) shows a compositional bias: polar residues. Positions 619-628 (ASEEGSESEG) are enriched in acidic residues. The stretch at 798-841 (QSEQESLLQQAQAQFRMAQEEARRNRLMRDMAQLRLQLEVSQLE) forms a coiled coil. One can recognise a PINc domain in the interval 872–995 (RQLATSGRFI…GPMQAALQAA (124 aa)).

As to quaternary structure, interacts with TERT, PPP2CA and SMG1. Part of a complex that contains SMG1, SMG5, SMG7, PPP2CA, a short isoform of UPF3A (isoform UPF3AS, but not isoform UPF3AL) and phosphorylated UPF1. Not detected in complexes that contain unphosphorylated UPF1. In terms of tissue distribution, ubiquitous.

It is found in the cytoplasm. The protein localises to the nucleus. Its function is as follows. Plays a role in nonsense-mediated mRNA decay. Does not have RNase activity by itself. Promotes dephosphorylation of UPF1. Together with SMG7 is thought to provide a link to the mRNA degradation machinery involving exonucleolytic pathways, and to serve as an adapter for UPF1 to protein phosphatase 2A (PP2A), thereby triggering UPF1 dephosphorylation. Necessary for TERT activity. The chain is Nonsense-mediated mRNA decay factor SMG5 from Homo sapiens (Human).